A 347-amino-acid polypeptide reads, in one-letter code: tRNA pseudouridine synthase D (347 aa).

The active-site Nucleophile is the D81. The 147-residue stretch at 158–304 (GVPNYFGNQR…MRHDRRAIAL (147 aa)) folds into the TRUD domain.

Belongs to the pseudouridine synthase TruD family.

The enzyme catalyses uridine(13) in tRNA = pseudouridine(13) in tRNA. In terms of biological role, responsible for synthesis of pseudouridine from uracil-13 in transfer RNAs. This Vibrio vulnificus (strain CMCP6) protein is tRNA pseudouridine synthase D.